The chain runs to 540 residues: Probable ATP-dependent RNA helicase DDX28 (540 aa).

Positions 3–18 (LAGPSRLLALAVRLLL) match the Mitochondrial targeting signal motif. The Q motif signature appears at 126 to 156 (GSFVDLGLEPRVLLALQEAVPEVVQPTSVQS). The 193-residue stretch at 159–351 (IPPLLRGRHL…SKVTSPDSLT (193 aa)) folds into the Helicase ATP-binding domain. 172–179 (AETGSGKT) contacts ATP. A Nuclear export signal motif is present at residues 180 to 191 (LSYLLPLFQRLL). Residues 286 to 289 (DEVD) carry the DEAD motif. Residues 377–536 (KVTELVQILK…GLASSVGDPL (160 aa)) enclose the Helicase C-terminal domain. Positions 520–523 (RRRR) match the Nuclear localization signal motif.

This sequence belongs to the DEAD box helicase family. In terms of assembly, monomer. Found in a complex with GRSF1, DHX30, FASTKD2 and FASTKD5. Associates with the 16S mitochondrial rRNA (16S mt-rRNA) and with the mitochondrial ribosome large subunit (39S).

It is found in the nucleus. Its subcellular location is the mitochondrion. The protein localises to the mitochondrion matrix. It localises to the mitochondrion nucleoid. The catalysed reaction is ATP + H2O = ADP + phosphate + H(+). Functionally, plays an essential role in facilitating the proper assembly of the mitochondrial large ribosomal subunit and its helicase activity is essential for this function. May be involved in RNA processing or transport. Has RNA and Mg(2+)-dependent ATPase activity. The polypeptide is Probable ATP-dependent RNA helicase DDX28 (Ddx28) (Mus musculus (Mouse)).